The primary structure comprises 581 residues: Semenogelin-2 (581 aa).

The first 23 residues, Met1 to Gly23, serve as a signal peptide directing secretion. 4 disordered regions span residues Gln24 to Ser62, Gly132 to Ser157, Lys173 to Tyr194, and Asn271 to Thr581. Polar residues-rich tracts occupy residues Gly138–Ser157 and Glu174–Tyr194. A compositionally biased stretch (basic and acidic residues) spans His291–Lys310. Residues Lys324–Ser333 are compositionally biased toward polar residues. Residues Gln334–Lys344 are compositionally biased toward basic and acidic residues. Residues Lys366–Gln396 show a composition bias toward polar residues. Composition is skewed to basic and acidic residues over residues Thr412–Gln425 and Asp455–Lys464. Polar residues-rich tracts occupy residues Gly481–Thr497 and Ser505–Ser529. Basic and acidic residues-rich tracts occupy residues Ala530–Tyr545 and Thr558–Thr581.

Belongs to the semenogelin family. As to quaternary structure, interacts with SERPINA5.

It localises to the secreted. In terms of biological role, participates in the formation of a gel matrix (sperm coagulum) entrapping the accessory gland secretions and ejaculated spermatozoa. This is Semenogelin-2 (SEMG2) from Pongo abelii (Sumatran orangutan).